The primary structure comprises 222 residues: Large ribosomal subunit protein uL4 (222 aa).

This sequence belongs to the universal ribosomal protein uL4 family. In terms of assembly, part of the 50S ribosomal subunit.

Its function is as follows. One of the primary rRNA binding proteins, this protein initially binds near the 5'-end of the 23S rRNA. It is important during the early stages of 50S assembly. It makes multiple contacts with different domains of the 23S rRNA in the assembled 50S subunit and ribosome. Functionally, forms part of the polypeptide exit tunnel. This Chlamydia trachomatis serovar L2 (strain ATCC VR-902B / DSM 19102 / 434/Bu) protein is Large ribosomal subunit protein uL4.